Here is a 26-residue protein sequence, read N- to C-terminus: uncharacterized protein (26 aa).

The protein localises to the plastid. It localises to the chloroplast. This is an uncharacterized protein from Trieres chinensis (Marine centric diatom).